Consider the following 585-residue polypeptide: Probable monoterpene synthase MTS1, chloroplastic (585 aa).

The tract at residues 1 to 29 is disordered; that stretch reads MSLSGVPLSAGLAPSPSNKPTNGKGQNIV. A chloroplast-targeting transit peptide spans 1–31; it reads MSLSGVPLSAGLAPSPSNKPTNGKGQNIVRR. A compositionally biased stretch (polar residues) spans 15–25; it reads SPSNKPTNGKG. (2E)-geranyl diphosphate contacts are provided by arginine 298, aspartate 335, aspartate 339, arginine 476, and aspartate 479. Mg(2+)-binding residues include aspartate 335 and aspartate 339. A DDXXD motif motif is present at residues 335 to 339; that stretch reads DDIYD. Residues aspartate 479, threonine 483, and glutamate 487 each contribute to the Mg(2+) site.

The protein belongs to the terpene synthase family. Tpsb subfamily. The cofactor is Mg(2+). It depends on Mn(2+) as a cofactor. Expressed in trichomes. Detected in flowers, but not in leaves.

Its subcellular location is the plastid. The protein resides in the chloroplast. The sequence is that of Probable monoterpene synthase MTS1, chloroplastic from Humulus lupulus (European hop).